We begin with the raw amino-acid sequence, 239 residues long: 2,3,4,5-tetrahydropyridine-2,6-dicarboxylate N-acetyltransferase (239 aa).

It belongs to the transferase hexapeptide repeat family. DapH subfamily.

It catalyses the reaction (S)-2,3,4,5-tetrahydrodipicolinate + acetyl-CoA + H2O = L-2-acetamido-6-oxoheptanedioate + CoA. The protein operates within amino-acid biosynthesis; L-lysine biosynthesis via DAP pathway; LL-2,6-diaminopimelate from (S)-tetrahydrodipicolinate (acetylase route): step 1/3. Functionally, catalyzes the transfer of an acetyl group from acetyl-CoA to tetrahydrodipicolinate. In Staphylococcus aureus (strain MRSA252), this protein is 2,3,4,5-tetrahydropyridine-2,6-dicarboxylate N-acetyltransferase.